The primary structure comprises 274 residues: Diaminopimelate epimerase (274 aa).

Asparagine 11, glutamine 44, and asparagine 64 together coordinate substrate. Cysteine 73 acts as the Proton donor in catalysis. Residues 74-75 (GN), asparagine 157, asparagine 190, and 208-209 (ER) contribute to the substrate site. Cysteine 217 functions as the Proton acceptor in the catalytic mechanism. 218-219 (GS) contributes to the substrate binding site.

This sequence belongs to the diaminopimelate epimerase family. Homodimer.

The protein resides in the cytoplasm. It catalyses the reaction (2S,6S)-2,6-diaminopimelate = meso-2,6-diaminopimelate. It functions in the pathway amino-acid biosynthesis; L-lysine biosynthesis via DAP pathway; DL-2,6-diaminopimelate from LL-2,6-diaminopimelate: step 1/1. Functionally, catalyzes the stereoinversion of LL-2,6-diaminopimelate (L,L-DAP) to meso-diaminopimelate (meso-DAP), a precursor of L-lysine and an essential component of the bacterial peptidoglycan. In Haemophilus ducreyi (strain 35000HP / ATCC 700724), this protein is Diaminopimelate epimerase.